The primary structure comprises 718 residues: Quinolinate synthase, chloroplastic (718 aa).

Residues 1–22 show a composition bias toward low complexity; sequence MALALSVAPTSSSLSSLLSRTP. The segment at 1 to 29 is disordered; it reads MALALSVAPTSSSLSSLLSRTPNPSPNFR. Residues 1–70 constitute a chloroplast transit peptide; sequence MALALSVAPT…VNASPFSISA (70 aa). The Cysteine persulfide intermediate role is filled by C132. Iminosuccinate-binding residues include H280 and S306. [4Fe-4S] cluster is bound at residue C360. Residues 389 to 391 and S411 contribute to the iminosuccinate site; that span reads YIN. C484 serves as a coordination point for [4Fe-4S] cluster. Residues 510-512 and T535 each bind iminosuccinate; that span reads HLE. C640 lines the [4Fe-4S] cluster pocket.

This sequence belongs to the quinolinate synthase family. Type 1 subfamily. In terms of assembly, homodimer. Interacts in vitro with NFS2, CpNIFS3 and AO. Part of a Cys defulfurase complex. The cofactor is [4Fe-4S] cluster. Expressed in roots, leaves, stems and flowers.

Its subcellular location is the plastid. It is found in the chloroplast. It catalyses the reaction iminosuccinate + dihydroxyacetone phosphate = quinolinate + phosphate + 2 H2O + H(+). It functions in the pathway cofactor biosynthesis; NAD(+) biosynthesis; quinolinate from iminoaspartate: step 1/1. Functionally, catalyzes the condensation of iminoaspartate with dihydroxyacetone phosphate to form quinolinate. Can complement nadA-deficient E.coli mutant. Essential for the de novo synthesis of NAD. Also participates in cysteine desulfurization mediated by NFS2. Can activate the cysteine desulfurase activity of NFS2 in vitro. In Arabidopsis thaliana (Mouse-ear cress), this protein is Quinolinate synthase, chloroplastic.